The sequence spans 174 residues: NADH-quinone oxidoreductase subunit C (174 aa).

Belongs to the complex I 30 kDa subunit family. As to quaternary structure, NDH-1 is composed of 14 different subunits. Subunits NuoB, C, D, E, F, and G constitute the peripheral sector of the complex.

It is found in the cell membrane. It catalyses the reaction a quinone + NADH + 5 H(+)(in) = a quinol + NAD(+) + 4 H(+)(out). Its function is as follows. NDH-1 shuttles electrons from NADH, via FMN and iron-sulfur (Fe-S) centers, to quinones in the respiratory chain. The immediate electron acceptor for the enzyme in this species is believed to be ubiquinone. Couples the redox reaction to proton translocation (for every two electrons transferred, four hydrogen ions are translocated across the cytoplasmic membrane), and thus conserves the redox energy in a proton gradient. This is NADH-quinone oxidoreductase subunit C from Roseiflexus castenholzii (strain DSM 13941 / HLO8).